The chain runs to 96 residues: HIG1 domain family member 1C (96 aa).

Residues 1–26 are Cytoplasmic-facing; that stretch reads MSSDEWSAAEDEGQLSRLLRKSRDSP. An HIG1 domain is found at 1–91; sequence MSSDEWSAAE…YKDYIRPRFF (91 aa). A helical membrane pass occupies residues 27-44; that stretch reads FVPVGMAGFVAVLSYGLY. The Extracellular portion of the chain corresponds to 45–58; the sequence is KLNSRREQKMSLHL. Residues 59-81 form a helical membrane-spanning segment; it reads IHVRVAAQGCVVGAVTLGVLYSM. Topologically, residues 82–96 are cytoplasmic; it reads YKDYIRPRFFNVPKK.

The protein localises to the membrane. This Mus musculus (Mouse) protein is HIG1 domain family member 1C (Higd1c).